The sequence spans 473 residues: Siroheme synthase (473 aa).

The precorrin-2 dehydrogenase /sirohydrochlorin ferrochelatase stretch occupies residues 1–206; it reads MDYLPIFMKI…GNTGEAEALL (206 aa). Residues 22-23 and 43-44 each bind NAD(+); these read TV and PK. The uroporphyrinogen-III C-methyltransferase stretch occupies residues 223 to 473; sequence GEVYIIGAGP…KSLLDDRVPA (251 aa). P232 lines the S-adenosyl-L-methionine pocket. D255 (proton acceptor) is an active-site residue. Residue K277 is the Proton donor of the active site. Residues 308 to 310, I313, 338 to 339, M390, and G419 contribute to the S-adenosyl-L-methionine site; these read GGD and TA.

The protein in the N-terminal section; belongs to the precorrin-2 dehydrogenase / sirohydrochlorin ferrochelatase family. This sequence in the C-terminal section; belongs to the precorrin methyltransferase family.

It catalyses the reaction uroporphyrinogen III + 2 S-adenosyl-L-methionine = precorrin-2 + 2 S-adenosyl-L-homocysteine + H(+). The catalysed reaction is precorrin-2 + NAD(+) = sirohydrochlorin + NADH + 2 H(+). It carries out the reaction siroheme + 2 H(+) = sirohydrochlorin + Fe(2+). The protein operates within cofactor biosynthesis; adenosylcobalamin biosynthesis; precorrin-2 from uroporphyrinogen III: step 1/1. It functions in the pathway cofactor biosynthesis; adenosylcobalamin biosynthesis; sirohydrochlorin from precorrin-2: step 1/1. It participates in porphyrin-containing compound metabolism; siroheme biosynthesis; precorrin-2 from uroporphyrinogen III: step 1/1. Its pathway is porphyrin-containing compound metabolism; siroheme biosynthesis; siroheme from sirohydrochlorin: step 1/1. The protein operates within porphyrin-containing compound metabolism; siroheme biosynthesis; sirohydrochlorin from precorrin-2: step 1/1. Multifunctional enzyme that catalyzes the SAM-dependent methylations of uroporphyrinogen III at position C-2 and C-7 to form precorrin-2 via precorrin-1. Then it catalyzes the NAD-dependent ring dehydrogenation of precorrin-2 to yield sirohydrochlorin. Finally, it catalyzes the ferrochelation of sirohydrochlorin to yield siroheme. The protein is Siroheme synthase of Hydrogenovibrio crunogenus (strain DSM 25203 / XCL-2) (Thiomicrospira crunogena).